Here is a 297-residue protein sequence, read N- to C-terminus: Bilin biosynthesis protein MpeU (297 aa).

This sequence belongs to the CpcE/RpcE/PecE family.

An enzyme involved in the biosynthesis of bilin. The chain is Bilin biosynthesis protein MpeU (mpeU) from Synechococcus sp. (strain WH8020).